Consider the following 176-residue polypeptide: Large ribosomal subunit protein uL6 (176 aa).

The span at 151–169 (RPPEPYKGRGIKYTDEHIQ) shows a compositional bias: basic and acidic residues. The interval 151–176 (RPPEPYKGRGIKYTDEHIQRKAGKTK) is disordered.

It belongs to the universal ribosomal protein uL6 family. In terms of assembly, part of the 50S ribosomal subunit.

Its function is as follows. This protein binds to the 23S rRNA, and is important in its secondary structure. It is located near the subunit interface in the base of the L7/L12 stalk, and near the tRNA binding site of the peptidyltransferase center. This Desulfosudis oleivorans (strain DSM 6200 / JCM 39069 / Hxd3) (Desulfococcus oleovorans) protein is Large ribosomal subunit protein uL6.